Here is a 355-residue protein sequence, read N- to C-terminus: Peptide chain release factor 1 (355 aa).

Residue Gln233 is modified to N5-methylglutamine.

Belongs to the prokaryotic/mitochondrial release factor family. In terms of processing, methylated by PrmC. Methylation increases the termination efficiency of RF1.

The protein resides in the cytoplasm. Its function is as follows. Peptide chain release factor 1 directs the termination of translation in response to the peptide chain termination codons UAG and UAA. This chain is Peptide chain release factor 1, found in Desulforudis audaxviator (strain MP104C).